The sequence spans 123 residues: Protein Wnt-7a (123 aa).

S1 is lipidated: O-palmitoleoyl serine; by PORCN. The tract at residues 33–61 is disordered linker; sequence VEPVRTHRNKRPVFLKIKKPLSYRKPMVT. C89 and C104 form a disulfide bridge. Residues N90 and N96 are each glycosylated (N-linked (GlcNAc...) asparagine).

This sequence belongs to the Wnt family. As to quaternary structure, forms a soluble 1:1 complex with AFM; this prevents oligomerization and is required for prolonged biological activity. The complex with AFM may represent the physiological form in body fluids. Interacts with FZD5. Interacts with PORCN. In terms of processing, palmitoleoylation is required for efficient binding to frizzled receptors. Depalmitoleoylation leads to Wnt signaling pathway inhibition.

Its subcellular location is the secreted. The protein localises to the extracellular space. It localises to the extracellular matrix. Ligand for members of the frizzled family of seven transmembrane receptors that functions in the canonical Wnt/beta-catenin signaling pathway. Plays an important role in embryonic development, including dorsal versus ventral patterning during limb development, skeleton development and urogenital tract development. Required for central nervous system (CNS) angiogenesis and blood-brain barrier regulation. The chain is Protein Wnt-7a (WNT-7A) from Alopias vulpinus (Common thresher shark).